A 217-amino-acid chain; its full sequence is 8-oxoguanine DNA glycosylase/AP lyase (217 aa).

Active-site residues include Lys-138 and Asp-157.

It belongs to the type-2 OGG1 family.

It carries out the reaction 2'-deoxyribonucleotide-(2'-deoxyribose 5'-phosphate)-2'-deoxyribonucleotide-DNA = a 3'-end 2'-deoxyribonucleotide-(2,3-dehydro-2,3-deoxyribose 5'-phosphate)-DNA + a 5'-end 5'-phospho-2'-deoxyribonucleoside-DNA + H(+). Functionally, catalyzes the excision of an oxidatively damaged form of guanine (7,8-dihydro-8-oxoguanine = 8-oxoG) from DNA. Also cleaves the DNA backbone at apurinic/apyrimidinic sites (AP sites). This is 8-oxoguanine DNA glycosylase/AP lyase from Fusobacterium nucleatum subsp. nucleatum (strain ATCC 25586 / DSM 15643 / BCRC 10681 / CIP 101130 / JCM 8532 / KCTC 2640 / LMG 13131 / VPI 4355).